We begin with the raw amino-acid sequence, 394 residues long: Serine palmitoyltransferase (394 aa).

Pyridoxal 5'-phosphate-binding positions include 111–112, Ser183, His211, and Thr239; that span reads GF. Lys242 is modified (N6-(pyridoxal phosphate)lysine).

It belongs to the class-II pyridoxal-phosphate-dependent aminotransferase family. It depends on pyridoxal 5'-phosphate as a cofactor.

The enzyme catalyses L-serine + hexadecanoyl-CoA + H(+) = 3-oxosphinganine + CO2 + CoA. Its pathway is lipid metabolism; sphingolipid metabolism. Functionally, involved in de novo bacterial ceramide synthesis. Catalyzes the condensation of L-serine with palmitoyl-CoA (hexadecanoyl-CoA) to produce 3-oxosphinganine. Also capable of using alanine as substrate leading to the formation of 1-deoxysphinganine (1-deoxySa). Contributes to the levels of endogenous sphingolipids in its host. This Bacteroides thetaiotaomicron (strain ATCC 29148 / DSM 2079 / JCM 5827 / CCUG 10774 / NCTC 10582 / VPI-5482 / E50) protein is Serine palmitoyltransferase.